The sequence spans 214 residues: Large ribosomal subunit protein bL25 (214 aa).

Residues 187 to 214 (AEVAPSIEETVEPEVIKKGKKAEEEEEK) form a disordered region. The span at 200–214 (EVIKKGKKAEEEEEK) shows a compositional bias: basic and acidic residues.

The protein belongs to the bacterial ribosomal protein bL25 family. CTC subfamily. In terms of assembly, part of the 50S ribosomal subunit; part of the 5S rRNA/L5/L18/L25 subcomplex. Contacts the 5S rRNA. Binds to the 5S rRNA independently of L5 and L18.

Functionally, this is one of the proteins that binds to the 5S RNA in the ribosome where it forms part of the central protuberance. In Thermodesulfovibrio yellowstonii (strain ATCC 51303 / DSM 11347 / YP87), this protein is Large ribosomal subunit protein bL25.